A 179-amino-acid polypeptide reads, in one-letter code: Guanosine-3',5'-bis(diphosphate) 3'-pyrophosphohydrolase MESH1 (179 aa).

An HD domain is found at 32–127 (YINHPLGVAR…VKLADKLYNL (96 aa)). Mn(2+)-binding residues include His35, His61, and Asp62. Active-site nucleophile residues include Glu65 and Asp66. Asp122 provides a ligand contact to Mn(2+).

This sequence belongs to the MESH1 family. It depends on Mn(2+) as a cofactor.

The catalysed reaction is guanosine 3',5'-bis(diphosphate) + H2O = GDP + diphosphate + H(+). Its function is as follows. ppGpp hydrolyzing enzyme involved in starvation response. This is Guanosine-3',5'-bis(diphosphate) 3'-pyrophosphohydrolase MESH1 (hddc3) from Xenopus tropicalis (Western clawed frog).